Consider the following 304-residue polypeptide: Ribonuclease BN (304 aa).

Positions 63, 65, 67, 68, 140, 211, and 269 each coordinate Zn(2+). The Proton acceptor role is filled by D67.

This sequence belongs to the RNase Z family. RNase BN subfamily. Homodimer. Requires Zn(2+) as cofactor.

Functionally, zinc phosphodiesterase, which has both exoribonuclease and endoribonuclease activities. The polypeptide is Ribonuclease BN (Cronobacter sakazakii (strain ATCC BAA-894) (Enterobacter sakazakii)).